Here is a 318-residue protein sequence, read N- to C-terminus: NADH-ubiquinone oxidoreductase chain 1 (318 aa).

Helical transmembrane passes span 2 to 22 (FMINILMLIIPILLAGAFLTL), 70 to 90 (MFILAPILALGLALTMWIPLP), 100 to 120 (LGVLFMLAMSSLAVYSILWSG), 147 to 167 (AIILLSVLLMSGSFTLSTLII), 172 to 192 (TWLILPAWPLAMMWFISTLAE), 222 to 242 (LFFMAEYANIIMMNMFTAILF), 253 to 273 (ELYTINFIIKSLLLTMLFLWI), and 294 to 314 (LPLTLALCMWHVSLPILTSGI).

This sequence belongs to the complex I subunit 1 family. In terms of assembly, core subunit of respiratory chain NADH dehydrogenase (Complex I) which is composed of 45 different subunits.

It is found in the mitochondrion inner membrane. It catalyses the reaction a ubiquinone + NADH + 5 H(+)(in) = a ubiquinol + NAD(+) + 4 H(+)(out). Functionally, core subunit of the mitochondrial membrane respiratory chain NADH dehydrogenase (Complex I) which catalyzes electron transfer from NADH through the respiratory chain, using ubiquinone as an electron acceptor. Essential for the catalytic activity and assembly of complex I. This chain is NADH-ubiquinone oxidoreductase chain 1 (MT-ND1), found in Bos mutus grunniens (Wild yak).